The chain runs to 405 residues: MQQDDEQEKSQQLQNFQSDDLLEKLKLLNYEKHLLKEFKLKPLSRFYFVKATNPGEQFYMFTLICWWLCKKLGKDMERPQEYDDPNTVAANIIKLLGEIDVPVDFQPNKLIRGAGPICLSVLEVLSTQACKVAQVGYQKLHIAQEEEFLGDYLEDNAEIILEKLEDEQNAAALSDDSDMELEAHNFRQLNWLNRPQKKSNGDVNLDERNPELDARMSDHQEWHLELERVLPQLKVFVKADARDWRTHISQMETLKTNILENSDTAEAQLKKLHSEFTFDLEKIESREKHLNNELKPLIQQFKELSIELSTIQYAQNQLQEDMEKQTAELNEVMMEQELKKEEMERRGQAMSDGSSVQQIRKAIAKLKDDTAQLNLEVALLVHAHDQDIVVRQLQQNQTTDLANNP.

Residues Glu-252–Leu-380 are a coiled coil.

Belongs to the IFT57 family.

The protein resides in the cytoplasm. It localises to the cytoskeleton. The protein localises to the cilium basal body. Its function is as follows. Required for the formation of cilia. This chain is Intraflagellar transport protein 57 homolog, found in Drosophila melanogaster (Fruit fly).